Reading from the N-terminus, the 189-residue chain is Auxin-induced protein IAA4 (189 aa).

The short motif at 8–12 (LRLGL) is the EAR-like (transcriptional repression) element. Residues 92-179 (GIFVKVSMDG…SCKRLRIMKG (88 aa)) enclose the PB1 domain.

Belongs to the Aux/IAA family. In terms of assembly, homodimers and heterodimers. Phosphorylated by phytochrome A in vitro.

The protein localises to the nucleus. Functionally, aux/IAA proteins are short-lived transcriptional factors that function as repressors of early auxin response genes at low auxin concentrations. Repression is thought to result from the interaction with auxin response factors (ARFs), proteins that bind to the auxin-responsive promoter element (AuxRE). Formation of heterodimers with ARF proteins may alter their ability to modulate early auxin response genes expression. This is Auxin-induced protein IAA4 (IAA4/5) from Pisum sativum (Garden pea).